We begin with the raw amino-acid sequence, 89 residues long: Mu-like prophage FluMu DNA-binding protein Ner (89 aa).

The segment at residues 57–76 (ERLVANAIGVPPEVIWAGRF) is a DNA-binding region (H-T-H motif).

This sequence belongs to the ner transcriptional regulatory family.

Functionally, negative regulator of transcription starting from the Pe and Pc promoters of Mu. Also negatively regulates its own gene transcription. This is Mu-like prophage FluMu DNA-binding protein Ner (nlp) from Haemophilus influenzae (strain ATCC 51907 / DSM 11121 / KW20 / Rd).